A 324-amino-acid polypeptide reads, in one-letter code: Glyoxylate/hydroxypyruvate reductase B (324 aa).

Catalysis depends on residues Arg-237 and Glu-266. The active-site Proton donor is His-285.

This sequence belongs to the D-isomer specific 2-hydroxyacid dehydrogenase family. GhrB subfamily. As to quaternary structure, homodimer.

Its subcellular location is the cytoplasm. It carries out the reaction glycolate + NADP(+) = glyoxylate + NADPH + H(+). It catalyses the reaction (R)-glycerate + NAD(+) = 3-hydroxypyruvate + NADH + H(+). The enzyme catalyses (R)-glycerate + NADP(+) = 3-hydroxypyruvate + NADPH + H(+). Its function is as follows. Catalyzes the NADPH-dependent reduction of glyoxylate and hydroxypyruvate into glycolate and glycerate, respectively. In Shigella flexneri, this protein is Glyoxylate/hydroxypyruvate reductase B.